We begin with the raw amino-acid sequence, 281 residues long: MEMO1 family protein PAE0818 (281 aa).

Belongs to the MEMO1 family.

The sequence is that of MEMO1 family protein PAE0818 from Pyrobaculum aerophilum (strain ATCC 51768 / DSM 7523 / JCM 9630 / CIP 104966 / NBRC 100827 / IM2).